The primary structure comprises 104 residues: Cytochrome c oxidase assembly factor 6 (104 aa).

The tract at residues 1–22 (MGLFSFDGGKKESQPPNTRSQR) is disordered. Positions 22–76 (RKLCWESRDAFFQCLDKADILDAMDPKNSKSIKSHCKVENEKFEENCAHSWIKYF) constitute a CHCH domain. The short motif at 25–35 (CWESRDAFFQC) is the Cx9C motif element. Cystine bridges form between Cys-25–Cys-68 and Cys-35–Cys-57. The Cx10C motif signature appears at 57-68 (CKVENEKFEENC).

Belongs to the cytochrome c oxidase subunit 6B family. Interacts with COX2.

Its subcellular location is the cytoplasm. The protein resides in the nucleus. It localises to the mitochondrion intermembrane space. Its function is as follows. Involved in the maturation of the mitochondrial respiratory chain complex IV subunit MT-CO2/COX2. Thereby, may regulate early steps of complex IV assembly. Mitochondrial respiratory chain complex IV or cytochrome c oxidase is the component of the respiratory chain that catalyzes the transfer of electrons from intermembrane space cytochrome c to molecular oxygen in the matrix and as a consequence contributes to the proton gradient involved in mitochondrial ATP synthesis. May also be required for efficient formation of respiratory supercomplexes comprised of complexes III and IV. The polypeptide is Cytochrome c oxidase assembly factor 6 (Saccharomyces cerevisiae (strain ATCC 204508 / S288c) (Baker's yeast)).